A 232-amino-acid polypeptide reads, in one-letter code: Small ribosomal subunit protein uS3 (232 aa).

Residues 39–107 (VRQFLTKELA…PAQINIAEVR (69 aa)) form the KH type-2 domain.

The protein belongs to the universal ribosomal protein uS3 family. Part of the 30S ribosomal subunit. Forms a tight complex with proteins S10 and S14.

Binds the lower part of the 30S subunit head. Binds mRNA in the 70S ribosome, positioning it for translation. This is Small ribosomal subunit protein uS3 from Erwinia tasmaniensis (strain DSM 17950 / CFBP 7177 / CIP 109463 / NCPPB 4357 / Et1/99).